We begin with the raw amino-acid sequence, 108 residues long: Large ribosomal subunit protein P1B (108 aa).

The span at 72–84 (AGSASGAAAGGEA) shows a compositional bias: low complexity. The segment at 72–108 (AGSASGAAAGGEAAAEEAAEEEAAEESDDDMGFGLFD) is disordered. The segment covering 85–102 (AAEEAAEEEAAEESDDDM) has biased composition (acidic residues).

Belongs to the eukaryotic ribosomal protein P1/P2 family. P1 and P2 exist as dimers at the large ribosomal subunit. In terms of processing, phosphorylated.

In terms of biological role, plays an important role in the elongation step of protein synthesis. The polypeptide is Large ribosomal subunit protein P1B (RPP1B) (Candida albicans (Yeast)).